Consider the following 254-residue polypeptide: Serotonin N-acetyltransferase 1, chloroplastic (254 aa).

Residues Met1–Ser83 constitute a chloroplast transit peptide. The 136-residue stretch at Val119–Phe254 folds into the N-acetyltransferase domain.

It localises to the plastid. Its subcellular location is the chloroplast. It is found in the nucleus. The enzyme catalyses a 2-arylethylamine + acetyl-CoA = an N-acetyl-2-arylethylamine + CoA + H(+). It participates in aromatic compound metabolism; melatonin biosynthesis; melatonin from serotonin: step 1/2. Its function is as follows. Catalyzes the N-acetylation of serotonin into N-acetylserotonin, the penultimate step in the synthesis of melatonin. Catalyzes in vitro the N-acetylation of tryptamine to produce N-acetyltryptamine, 5-methoxytryptamine to produce melatonin and tyramine to produce N-acetyltyramine. Acetyltransferase required for geminivirus infection and systemic spread. This is Serotonin N-acetyltransferase 1, chloroplastic from Oryza sativa subsp. indica (Rice).